Consider the following 169-residue polypeptide: Ribosome maturation factor RimM (169 aa).

A PRC barrel domain is found at 95–169 (EDGYYWTDLI…QITVDWELGY (75 aa)).

It belongs to the RimM family. As to quaternary structure, binds ribosomal protein uS19.

The protein resides in the cytoplasm. In terms of biological role, an accessory protein needed during the final step in the assembly of 30S ribosomal subunit, possibly for assembly of the head region. Essential for efficient processing of 16S rRNA. May be needed both before and after RbfA during the maturation of 16S rRNA. It has affinity for free ribosomal 30S subunits but not for 70S ribosomes. This Nitrosomonas europaea (strain ATCC 19718 / CIP 103999 / KCTC 2705 / NBRC 14298) protein is Ribosome maturation factor RimM.